A 224-amino-acid chain; its full sequence is Ribonuclease HII (224 aa).

Positions 1–219 (MMIAGIDEAG…VENIREELKK (219 aa)) constitute an RNase H type-2 domain. Residues Asp7, Glu8, and Asp105 each coordinate a divalent metal cation.

It belongs to the RNase HII family. The cofactor is Mn(2+). It depends on Mg(2+) as a cofactor.

Its subcellular location is the cytoplasm. It catalyses the reaction Endonucleolytic cleavage to 5'-phosphomonoester.. Its function is as follows. Endonuclease that specifically degrades the RNA of RNA-DNA hybrids. The polypeptide is Ribonuclease HII (Methanosarcina barkeri (strain Fusaro / DSM 804)).